A 129-amino-acid chain; its full sequence is Ribonuclease P protein component (129 aa).

This sequence belongs to the RnpA family. Consists of a catalytic RNA component (M1 or rnpB) and a protein subunit.

It catalyses the reaction Endonucleolytic cleavage of RNA, removing 5'-extranucleotides from tRNA precursor.. Functionally, RNaseP catalyzes the removal of the 5'-leader sequence from pre-tRNA to produce the mature 5'-terminus. It can also cleave other RNA substrates such as 4.5S RNA. The protein component plays an auxiliary but essential role in vivo by binding to the 5'-leader sequence and broadening the substrate specificity of the ribozyme. In Prochlorococcus marinus (strain MIT 9515), this protein is Ribonuclease P protein component.